Here is a 170-residue protein sequence, read N- to C-terminus: Adenine phosphoribosyltransferase (170 aa).

It belongs to the purine/pyrimidine phosphoribosyltransferase family. Homodimer.

It localises to the cytoplasm. The catalysed reaction is AMP + diphosphate = 5-phospho-alpha-D-ribose 1-diphosphate + adenine. Its pathway is purine metabolism; AMP biosynthesis via salvage pathway; AMP from adenine: step 1/1. Its function is as follows. Catalyzes a salvage reaction resulting in the formation of AMP, that is energically less costly than de novo synthesis. The protein is Adenine phosphoribosyltransferase of Bacillus cereus (strain G9842).